We begin with the raw amino-acid sequence, 347 residues long: Nod factor export ATP-binding protein I (347 aa).

A compositionally biased stretch (basic and acidic residues) spans 1-11 (MGENMEREMLR). Residues 1–32 (MGENMEREMLRPKTIAMDQNSASARSNPEREI) are disordered. Polar residues predominate over residues 17–26 (MDQNSASARS). In terms of domain architecture, ABC transporter spans 49-279 (IDLQAVTMIY…IIGCPVIEVY (231 aa)). 81 to 88 (GPNGAGKS) contacts ATP.

This sequence belongs to the ABC transporter superfamily. Lipooligosaccharide exporter (TC 3.A.1.102) family. In terms of assembly, the complex is composed of two ATP-binding proteins (NodI) and two transmembrane proteins (NodJ).

Its subcellular location is the cell inner membrane. In terms of biological role, part of the ABC transporter complex NodIJ involved in the export of the nodulation factors (Nod factors), the bacterial signal molecules that induce symbiosis and subsequent nodulation induction. Nod factors are LCO (lipo-chitin oligosaccharide), a modified beta-1,4-linked N-acetylglucosamine oligosaccharide. This subunit is responsible for energy coupling to the transport system. This chain is Nod factor export ATP-binding protein I, found in Neorhizobium galegae (Rhizobium galegae).